Here is a 445-residue protein sequence, read N- to C-terminus: Argininosuccinate synthase (445 aa).

Residues 17-25 and A43 each bind ATP; that span reads AFSGGLDTS. Residue Y99 participates in L-citrulline binding. ATP is bound by residues G129 and T131. Residues T131, N135, and D136 each coordinate L-aspartate. N135 is a binding site for L-citrulline. An ATP-binding site is contributed by D136. 2 residues coordinate L-citrulline: R139 and S192. D194 contacts ATP. L-citrulline contacts are provided by T201, E203, and E280.

It belongs to the argininosuccinate synthase family. Type 2 subfamily. As to quaternary structure, homotetramer.

The protein localises to the cytoplasm. It catalyses the reaction L-citrulline + L-aspartate + ATP = 2-(N(omega)-L-arginino)succinate + AMP + diphosphate + H(+). It participates in amino-acid biosynthesis; L-arginine biosynthesis; L-arginine from L-ornithine and carbamoyl phosphate: step 2/3. This chain is Argininosuccinate synthase, found in Bradyrhizobium sp. (strain BTAi1 / ATCC BAA-1182).